Here is a 339-residue protein sequence, read N- to C-terminus: Alcohol dehydrogenase notN (339 aa).

Positions 44, 65, 66, 99, 102, 110, and 152 each coordinate Zn(2+). Position 65 (His65) interacts with an alcohol. Residues 176 to 181 (GLGGLG), 196 to 201 (VAISRG), Lys204, 263 to 265 (LSF), 287 to 289 (PSG), and 295 to 297 (EDA) each bind NAD(+).

This sequence belongs to the zinc-containing alcohol dehydrogenase family. Requires Zn(2+) as cofactor.

It catalyses the reaction a primary alcohol + NAD(+) = an aldehyde + NADH + H(+). The enzyme catalyses a secondary alcohol + NAD(+) = a ketone + NADH + H(+). Functionally, alcohol dehydrogenase; part of the gene cluster that mediates the biosynthesis of notoamide, a fungal indole alkaloid that belongs to a family of natural products containing a characteristic bicyclo[2.2.2]diazaoctane core. The first step of notoamide biosynthesis involves coupling of L-proline and L-tryptophan by the bimodular NRPS notE, to produce cyclo-L-tryptophan-L-proline called brevianamide F. The reverse prenyltransferase notF then acts as a deoxybrevianamide E synthase and converts brevianamide F to deoxybrevianamide E via reverse prenylation at C-2 of the indole ring leading to the bicyclo[2.2.2]diazaoctane core. Deoxybrevianamide E is further hydroxylated at C-6 of the indole ring, likely catalyzed by the cytochrome P450 monooxygenase notG, to yield 6-hydroxy-deoxybrevianamide E. 6-hydroxy-deoxybrevianamide E is a specific substrate of the prenyltransferase notC for normal prenylation at C-7 to produce 6-hydroxy-7-prenyl-deoxybrevianamide, also called notoamide S. As the proposed pivotal branching point in notoamide biosynthesis, notoamide S can be diverted to notoamide E through an oxidative pyran ring closure putatively catalyzed by either notH cytochrome P450 monooxygenase or the notD FAD-linked oxidoreductase. This step would be followed by an indole 2,3-epoxidation-initiated pinacol-like rearrangement catalyzed by the notB FAD-dependent monooxygenase leading to the formation of notoamide C and notoamide D. On the other hand notoamide S is converted to notoamide T by notH (or notD), a bifunctional oxidase that also functions as the intramolecular Diels-Alderase responsible for generation of (+)-notoamide T. To generate antipodal (-)-notoaminide T, notH' (or notD') in Aspergillus versicolor is expected to catalyze a Diels-Alder reaction leading to the opposite stereochemistry. The remaining oxidoreductase notD (or notH) likely catalyzes the oxidative pyran ring formation to yield (+)-stephacidin A. The FAD-dependent monooxygenase notI is highly similar to notB and is predicted to catalyze a similar conversion from (+)-stephacidin A to (-)-notoamide B via the 2,3-epoxidation of (+)-stephacidin A followed by a pinacol-type rearrangement. Finally, it remains unclear which enzyme could be responsible for the final hydroxylation steps leading to notoamide A and sclerotiamide. The function of notN in the notoamide biosynthesis has not been determined yet. This Aspergillus sp. (strain MF297-2) protein is Alcohol dehydrogenase notN.